The following is a 241-amino-acid chain: Proteasome subunit alpha (241 aa).

Belongs to the peptidase T1A family. The 20S proteasome core is composed of 14 alpha and 14 beta subunits that assemble into four stacked heptameric rings, resulting in a barrel-shaped structure. The two inner rings, each composed of seven catalytic beta subunits, are sandwiched by two outer rings, each composed of seven alpha subunits. The catalytic chamber with the active sites is on the inside of the barrel. Has a gated structure, the ends of the cylinder being occluded by the N-termini of the alpha-subunits. Is capped at one or both ends by the proteasome regulatory ATPase, PAN.

It is found in the cytoplasm. The formation of the proteasomal ATPase PAN-20S proteasome complex, via the docking of the C-termini of PAN into the intersubunit pockets in the alpha-rings, triggers opening of the gate for substrate entry. Interconversion between the open-gate and close-gate conformations leads to a dynamic regulation of the 20S proteasome proteolysis activity. Component of the proteasome core, a large protease complex with broad specificity involved in protein degradation. In Saccharolobus solfataricus (strain ATCC 35092 / DSM 1617 / JCM 11322 / P2) (Sulfolobus solfataricus), this protein is Proteasome subunit alpha.